The following is a 263-amino-acid chain: Glutamate 5-kinase (263 aa).

Lys-15 lines the ATP pocket. 3 residues coordinate substrate: Ser-55, Asp-142, and Asn-154. ATP contacts are provided by residues 174-175 and 216-222; these read SD and TGGIETK.

The protein belongs to the glutamate 5-kinase family.

The protein localises to the cytoplasm. The catalysed reaction is L-glutamate + ATP = L-glutamyl 5-phosphate + ADP. Its pathway is amino-acid biosynthesis; L-proline biosynthesis; L-glutamate 5-semialdehyde from L-glutamate: step 1/2. In terms of biological role, catalyzes the transfer of a phosphate group to glutamate to form L-glutamate 5-phosphate. This chain is Glutamate 5-kinase, found in Alkaliphilus oremlandii (strain OhILAs) (Clostridium oremlandii (strain OhILAs)).